The primary structure comprises 271 residues: (+)-cis,trans-nepetalactol synthase NEPS1 (271 aa).

Residues 24–30 (GGASGIG), 49–51 (DIQ), 72–73 (DV), and N99 each bind NAD(+). Residues T154 and Y167 each coordinate substrate. Residues Y167, K171, and 200–205 (VLTPLA) each bind NAD(+). The active-site Proton acceptor is Y167.

The protein belongs to the short-chain dehydrogenases/reductases (SDR) family.

The catalysed reaction is (S)-8-oxocitronellyl enol = cis-trans-nepetalactol. It catalyses the reaction cis-cis-nepetalactol + NAD(+) = cis-cis-nepetalactone + NADH + H(+). It carries out the reaction cis-trans-nepetalactol + NAD(+) = cis-trans-nepetalactone + NADH + H(+). In terms of biological role, bifunctional enzyme that possesses cyclase and dehydrogenase activities. Functions as a non-oxidoreductive cyclase to promote the formation of cis-trans-nepetalactol. Functions as dehydrogenase to oxidize cis-cis-nepetalactol and cis-trans-nepetalactol into nepetalactones, metabolites that are both insect-repellent and have euphoric effect in cats. Binds NAD(+) as classical short-chain dehydrogenase/reductase (SDR), but does not utilize it for its redox-neutral cyclase activity. This chain is (+)-cis,trans-nepetalactol synthase NEPS1, found in Nepeta racemosa (Catmint).